Reading from the N-terminus, the 213-residue chain is Large ribosomal subunit protein uL1 (213 aa).

It belongs to the universal ribosomal protein uL1 family. In terms of assembly, part of the 50S ribosomal subunit.

Functionally, probably involved in E site tRNA release. Binds directly to 23S rRNA. Protein L1 is also a translational repressor protein, it controls the translation of its operon by binding to its mRNA. In Methanothermococcus thermolithotrophicus (Methanococcus thermolithotrophicus), this protein is Large ribosomal subunit protein uL1.